We begin with the raw amino-acid sequence, 1097 residues long: Leukemia inhibitory factor receptor (1097 aa).

Residues 1–44 (MMDIYVCLKRPSWMVDNKRMRTASNFQWLLSTFILLYLMNQVNS) form the signal peptide. Over 45 to 833 (QKKGAPHDLK…SMYVVTKENS (789 aa)) the chain is Extracellular. Residues 49 to 138 (APHDLKCVTN…EQNVSLIPDT (90 aa)) form the Fibronectin type-III 1 domain. 2 cysteine pairs are disulfide-bonded: Cys-55/Cys-65 and Cys-82/Cys-90. Asn-64, Asn-85, Asn-131, Asn-143, Asn-191, Asn-243, and Asn-303 each carry an N-linked (GlcNAc...) asparagine glycan. Residues Cys-213 and Cys-270 are joined by a disulfide bond. Fibronectin type-III domains are found at residues 335–434 (TPQQ…VYPH), 435–534 (TPTS…TEAS), 538–629 (GPDT…IPND), 627–719 (PNDD…IGYI), and 724–833 (PIVA…KENS). An intrachain disulfide couples Cys-341 to Cys-351. 6 N-linked (GlcNAc...) asparagine glycosylation sites follow: Asn-390, Asn-407, Asn-426, Asn-445, Asn-481, and Asn-489. Cys-466 and Cys-511 are disulfide-bonded. The WSXWS motif signature appears at 519-523 (WSKWS). 6 N-linked (GlcNAc...) asparagine glycosylation sites follow: Asn-572, Asn-652, Asn-663, Asn-680, Asn-729, and Asn-787. Residues 834–858 (VGLIIAILIPVAVAVIVGVVTSILC) traverse the membrane as a helical segment. Topologically, residues 859 to 1097 (YRKREWIKET…TNFFQNKPND (239 aa)) are cytoplasmic. The Box 1 motif motif lies at 869 to 877 (FYPDIPNPE). Ser-927 carries the phosphoserine modification. A disordered region spans residues 983-1005 (PQAKPEEEQENDPVGGAGYKPQM). Ser-1044 is modified (phosphoserine). A disordered region spans residues 1066–1097 (RQFLIPPKDEDSPKSNGGGWSFTNFFQNKPND). Residues 1086 to 1097 (SFTNFFQNKPND) show a composition bias toward polar residues.

Belongs to the type I cytokine receptor family. Type 2 subfamily. As to quaternary structure, heterodimer composed of LIFR and IL6ST. The heterodimer formed by LIFR and IL6ST interacts with the complex formed by CNTF and CNTFR.

Its subcellular location is the cell membrane. The protein resides in the secreted. Its function is as follows. Signal-transducing molecule. May have a common pathway with IL6ST. The soluble form inhibits the biological activity of LIF by blocking its binding to receptors on target cells. This is Leukemia inhibitory factor receptor (LIFR) from Homo sapiens (Human).